We begin with the raw amino-acid sequence, 113 residues long: LQPMAIALAAVADGTSMITENVFEARLAFVEEMIRLGADARTDGHHAVVRGIPQLSSAPVWSSDIRAGAGLVLAGLVADGETEVHDVFHIDRGYRLFVENLLSLGAEIERVGS.

V22 lines the UDP-N-acetyl-alpha-D-glucosamine pocket.

The protein belongs to the EPSP synthase family. MurA subfamily.

The protein localises to the cytoplasm. The enzyme catalyses phosphoenolpyruvate + UDP-N-acetyl-alpha-D-glucosamine = UDP-N-acetyl-3-O-(1-carboxyvinyl)-alpha-D-glucosamine + phosphate. The protein operates within cell wall biogenesis; peptidoglycan biosynthesis. Its function is as follows. Cell wall formation. Adds enolpyruvyl to UDP-N-acetylglucosamine. This Mycolicibacterium fortuitum (Mycobacterium fortuitum) protein is UDP-N-acetylglucosamine 1-carboxyvinyltransferase (murA).